Reading from the N-terminus, the 443-residue chain is Xaa-Pro dipeptidase (443 aa).

Mn(2+) contacts are provided by aspartate 246, aspartate 257, histidine 339, glutamate 384, and glutamate 423.

It belongs to the peptidase M24B family. Bacterial-type prolidase subfamily. Requires Mn(2+) as cofactor.

It carries out the reaction Xaa-L-Pro dipeptide + H2O = an L-alpha-amino acid + L-proline. In terms of biological role, splits dipeptides with a prolyl residue in the C-terminal position. This chain is Xaa-Pro dipeptidase, found in Escherichia coli O8 (strain IAI1).